Here is a 665-residue protein sequence, read N- to C-terminus: ATPase WRNIP1 (665 aa).

The UBZ4-type zinc finger occupies 17–44; that stretch reads QVQCPVCQQMMPAAHINSHLDRCLLLHP. Cys-20, Cys-23, His-31, His-35, and Cys-39 together coordinate Zn(2+). Residues 48-190 form a disordered region; sequence AEPAAGSHRA…DGEDDPGHWD (143 aa). Ser-65 and Ser-75 each carry phosphoserine. Residues 76-89 are compositionally biased toward polar residues; that stretch reads ESSALKQPATPTAA. A Glycyl lysine isopeptide (Lys-Gly) (interchain with G-Cter in ubiquitin) cross-link involves residue Lys-81. The residue at position 85 (Thr-85) is a Phosphothreonine. A phosphoserine mark is found at Ser-91 and Ser-92. Acidic residues predominate over residues 92-104; sequence SEGEGEEGDDGGE. Thr-116 carries the post-translational modification Phosphothreonine. Residues 130–155 show a composition bias toward low complexity; the sequence is RSSSPGRKGSGKRPAAAAAAGSASPR. Ser-139 carries the phosphoserine modification. Lys-141 is covalently cross-linked (Glycyl lysine isopeptide (Lys-Gly) (interchain with G-Cter in ubiquitin)). Residue Ser-153 is modified to Phosphoserine. Positions 159-184 are enriched in acidic residues; the sequence is EAEAQEEEEAVGDGDGDGDADADGED. Lys-225 participates in a covalent cross-link: Glycyl lysine isopeptide (Lys-Gly) (interchain with G-Cter in ubiquitin). Residue 270–276 participates in ATP binding; that stretch reads PGCGKTT. Glycyl lysine isopeptide (Lys-Gly) (interchain with G-Cter in ubiquitin) cross-links involve residues Lys-301, Lys-310, Lys-316, Lys-322, and Lys-335. A Glycyl lysine isopeptide (Lys-Gly) (interchain with G-Cter in SUMO2); alternate cross-link involves residue Lys-482. Lys-482 is covalently cross-linked (Glycyl lysine isopeptide (Lys-Gly) (interchain with G-Cter in ubiquitin); alternate). Residues Tyr-534 and Tyr-562 each carry the phosphotyrosine modification. Lys-627 participates in a covalent cross-link: Glycyl lysine isopeptide (Lys-Gly) (interchain with G-Cter in ubiquitin). Residue Lys-633 forms a Glycyl lysine isopeptide (Lys-Gly) (interchain with G-Cter in ubiquitin); alternate linkage. The residue at position 633 (Lys-633) is an N6-acetyllysine; alternate. Residue Lys-636 forms a Glycyl lysine isopeptide (Lys-Gly) (interchain with G-Cter in ubiquitin) linkage.

The protein belongs to the AAA ATPase family. RarA/MGS1/WRNIP1 subfamily. Forms homooligomers, possibly octamers. Directly interacts with POLD1, POLD2 and POLD4. Interacts with the N-terminal domain of WRN. Interacts (via UBZ4-type zinc finger) with monoubiquitin and polyubiquitin. Interacts with TRIM14 and PPP6C; these interactions positively regulate the RIGI signaling pathway. Post-translationally, sumoylated with SUMO1 and SUMO2/3. Ubiquitously expressed.

It localises to the nucleus. The protein localises to the cytoplasm. It catalyses the reaction ATP + H2O = ADP + phosphate + H(+). Its function is as follows. Functions as a modulator of initiation or reinitiation events during DNA polymerase delta-mediated DNA synthesis. In the presence of ATP, stimulation of DNA polymerase delta-mediated DNA synthesis is decreased. Also plays a role in the innate immune defense against viruses. Stabilizes the RIGI dsRNA interaction and promotes RIGI 'Lys-63'-linked polyubiquitination. In turn, RIGI transmits the signal through mitochondrial MAVS. The chain is ATPase WRNIP1 from Homo sapiens (Human).